Here is a 358-residue protein sequence, read N- to C-terminus: DNA polymerase IV (358 aa).

The region spanning 4–185 (IIHIDMDCYF…LSLRKIPGVG (182 aa)) is the UmuC domain. Residues Asp8 and Asp103 each coordinate Mg(2+). Residue Glu104 is part of the active site.

It belongs to the DNA polymerase type-Y family. As to quaternary structure, monomer. Mg(2+) serves as cofactor.

Its subcellular location is the cytoplasm. The enzyme catalyses DNA(n) + a 2'-deoxyribonucleoside 5'-triphosphate = DNA(n+1) + diphosphate. Functionally, poorly processive, error-prone DNA polymerase involved in untargeted mutagenesis. Copies undamaged DNA at stalled replication forks, which arise in vivo from mismatched or misaligned primer ends. These misaligned primers can be extended by PolIV. Exhibits no 3'-5' exonuclease (proofreading) activity. May be involved in translesional synthesis, in conjunction with the beta clamp from PolIII. The protein is DNA polymerase IV of Shewanella baltica (strain OS195).